The chain runs to 472 residues: Siroheme synthase 1 (472 aa).

The interval 1–203 (MDYLPLFADL…GQLTEAENEL (203 aa)) is precorrin-2 dehydrogenase /sirohydrochlorin ferrochelatase. NAD(+)-binding positions include 22-23 (EV) and 43-44 (QT). Residue Ser128 is modified to Phosphoserine. Positions 215–472 (GEVALVGAGP…AISPSVVNLA (258 aa)) are uroporphyrinogen-III C-methyltransferase. Residue Pro224 participates in S-adenosyl-L-methionine binding. The active-site Proton acceptor is the Asp247. Lys269 acts as the Proton donor in catalysis. S-adenosyl-L-methionine is bound by residues 300 to 302 (GGD), Ile305, 330 to 331 (TA), Met382, and Gly411.

It in the N-terminal section; belongs to the precorrin-2 dehydrogenase / sirohydrochlorin ferrochelatase family. The protein in the C-terminal section; belongs to the precorrin methyltransferase family.

The enzyme catalyses uroporphyrinogen III + 2 S-adenosyl-L-methionine = precorrin-2 + 2 S-adenosyl-L-homocysteine + H(+). It carries out the reaction precorrin-2 + NAD(+) = sirohydrochlorin + NADH + 2 H(+). It catalyses the reaction siroheme + 2 H(+) = sirohydrochlorin + Fe(2+). It functions in the pathway cofactor biosynthesis; adenosylcobalamin biosynthesis; precorrin-2 from uroporphyrinogen III: step 1/1. Its pathway is cofactor biosynthesis; adenosylcobalamin biosynthesis; sirohydrochlorin from precorrin-2: step 1/1. It participates in porphyrin-containing compound metabolism; siroheme biosynthesis; precorrin-2 from uroporphyrinogen III: step 1/1. The protein operates within porphyrin-containing compound metabolism; siroheme biosynthesis; siroheme from sirohydrochlorin: step 1/1. It functions in the pathway porphyrin-containing compound metabolism; siroheme biosynthesis; sirohydrochlorin from precorrin-2: step 1/1. Functionally, multifunctional enzyme that catalyzes the SAM-dependent methylations of uroporphyrinogen III at position C-2 and C-7 to form precorrin-2 via precorrin-1. Then it catalyzes the NAD-dependent ring dehydrogenation of precorrin-2 to yield sirohydrochlorin. Finally, it catalyzes the ferrochelation of sirohydrochlorin to yield siroheme. In Yersinia pestis bv. Antiqua (strain Nepal516), this protein is Siroheme synthase 1.